The primary structure comprises 392 residues: Xyloside xylosyltransferase 1 (392 aa).

The Cytoplasmic segment spans residues 1–19 (MGLLRGGAACARAMARLGA). A helical; Signal-anchor for type II membrane protein membrane pass occupies residues 20–42 (LRSHYCALLLAAALAVCAFYYLG). At 43–392 (SGRETFSSAT…GNCNTPIPED (350 aa)) the chain is on the lumenal side. 103 to 105 (MFT) provides a ligand contact to UDP-alpha-D-xylose. Asp-225 is a binding site for Mn(2+). Leu-226 provides a ligand contact to UDP-alpha-D-xylose. Residue Asp-227 coordinates Mn(2+). The interval 262-265 (HTFW) is interaction with target proteins. UDP-alpha-D-xylose is bound by residues Ser-289, Leu-327, and Gln-330. The a glycoprotein site is built by Gln-330 and Trp-359. Cystine bridges form between Cys-349/Cys-374 and Cys-356/Cys-385. A Mn(2+)-binding site is contributed by His-382. Asn-384 contributes to the a glycoprotein binding site.

The protein belongs to the glycosyltransferase 8 family. Homodimer. Dimer formation may be essential for the retention in endoplasmic reticulum. The cofactor is Mg(2+). Mn(2+) serves as cofactor.

It is found in the endoplasmic reticulum membrane. It catalyses the reaction 3-O-[alpha-D-xylosyl-(1-&gt;3)-beta-D-glucosyl]-L-seryl-[EGF-like domain protein] + UDP-alpha-D-xylose = 3-O-[alpha-D-xylosyl-(1-&gt;3)-alpha-D-xylosyl-(1-&gt;3)-beta-D-glucosyl]-L-seryl-[EGF-like domain protein] + UDP + H(+). Functionally, alpha-1,3-xylosyltransferase, which elongates the O-linked xylose-glucose disaccharide attached to EGF-like repeats in the extracellular domain of target proteins by catalyzing the addition of the second xylose. Known targets include Notch proteins and coagulation factors, such as F9. The polypeptide is Xyloside xylosyltransferase 1 (Xxylt1) (Mus musculus (Mouse)).